Consider the following 335-residue polypeptide: Biotin synthase (335 aa).

Residues 51–281 (YRVQLASLLS…RSRVRLSAGR (231 aa)) enclose the Radical SAM core domain. [4Fe-4S] cluster-binding residues include Cys66, Cys70, and Cys73. Residues Cys112, Cys144, Cys204, and Arg276 each coordinate [2Fe-2S] cluster.

This sequence belongs to the radical SAM superfamily. Biotin synthase family. Homodimer. [4Fe-4S] cluster serves as cofactor. The cofactor is [2Fe-2S] cluster.

The enzyme catalyses (4R,5S)-dethiobiotin + (sulfur carrier)-SH + 2 reduced [2Fe-2S]-[ferredoxin] + 2 S-adenosyl-L-methionine = (sulfur carrier)-H + biotin + 2 5'-deoxyadenosine + 2 L-methionine + 2 oxidized [2Fe-2S]-[ferredoxin]. Its pathway is cofactor biosynthesis; biotin biosynthesis; biotin from 7,8-diaminononanoate: step 2/2. In terms of biological role, catalyzes the conversion of dethiobiotin (DTB) to biotin by the insertion of a sulfur atom into dethiobiotin via a radical-based mechanism. The protein is Biotin synthase of Prochlorococcus marinus (strain MIT 9303).